We begin with the raw amino-acid sequence, 252 residues long: Adapter protein MecA (252 aa).

The protein belongs to the MecA family. In terms of assembly, homodimer.

Functionally, enables the recognition and targeting of unfolded and aggregated proteins to the ClpC protease or to other proteins involved in proteolysis. In Streptococcus uberis (strain ATCC BAA-854 / 0140J), this protein is Adapter protein MecA.